A 437-amino-acid polypeptide reads, in one-letter code: Histidine--tRNA ligase (437 aa).

It belongs to the class-II aminoacyl-tRNA synthetase family. Homodimer.

The protein resides in the cytoplasm. It catalyses the reaction tRNA(His) + L-histidine + ATP = L-histidyl-tRNA(His) + AMP + diphosphate + H(+). The chain is Histidine--tRNA ligase from Opitutus terrae (strain DSM 11246 / JCM 15787 / PB90-1).